A 358-amino-acid chain; its full sequence is MTRLLIAASGTGGHLFPALAVAEALPEDWQVRWLGVPDRLETQLVPARYSLFTVNAGGLQGSRLSKAVQLLLLLAAGVSVARLIRRERIQLVLSTGGYIAAPAILAARFCGVPTVLHEANAIPGRVTRLLGRFCGAVAVGLPAAAGRIPGSRPLMTGMPVRADFLQSQPCPAWVPEGRGPLLVVIGGSQGAVGLNRMVRAVLPPLLEQGCRVVHLTGRNDTEVGQVQHPLLVEQPFSDEIPGLLQHADLAVSRAGAGSLSELAVCGTPTILVPFPQAADQHQEANAACAAEQGGAVIVHQHEPEATVLQQTIQCLLGHRLGHPDADPSLLPSMREGMERLAIRDADQRLVDLLQSLLD.

UDP-N-acetyl-alpha-D-glucosamine contacts are provided by residues 11–13 (TGG), asparagine 120, arginine 161, serine 188, and glutamine 282.

Belongs to the glycosyltransferase 28 family. MurG subfamily.

The protein localises to the cell inner membrane. It carries out the reaction di-trans,octa-cis-undecaprenyl diphospho-N-acetyl-alpha-D-muramoyl-L-alanyl-D-glutamyl-meso-2,6-diaminopimeloyl-D-alanyl-D-alanine + UDP-N-acetyl-alpha-D-glucosamine = di-trans,octa-cis-undecaprenyl diphospho-[N-acetyl-alpha-D-glucosaminyl-(1-&gt;4)]-N-acetyl-alpha-D-muramoyl-L-alanyl-D-glutamyl-meso-2,6-diaminopimeloyl-D-alanyl-D-alanine + UDP + H(+). Its pathway is cell wall biogenesis; peptidoglycan biosynthesis. In terms of biological role, cell wall formation. Catalyzes the transfer of a GlcNAc subunit on undecaprenyl-pyrophosphoryl-MurNAc-pentapeptide (lipid intermediate I) to form undecaprenyl-pyrophosphoryl-MurNAc-(pentapeptide)GlcNAc (lipid intermediate II). The protein is UDP-N-acetylglucosamine--N-acetylmuramyl-(pentapeptide) pyrophosphoryl-undecaprenol N-acetylglucosamine transferase of Parasynechococcus marenigrum (strain WH8102).